The following is a 174-amino-acid chain: Gamma-crystallin F (174 aa).

Beta/gamma crystallin 'Greek key' domains are found at residues 2-40 (GKITFYEDRGFQGRHYECSTDHSNLQPYFSRCNSVRVDS) and 41-83 (GCWM…HLIP). The connecting peptide stretch occupies residues 84 to 87 (HSSS). Beta/gamma crystallin 'Greek key' domains are found at residues 88-128 (HRIR…HVIE) and 129-171 (GYWV…RRIM).

This sequence belongs to the beta/gamma-crystallin family.

Functionally, crystallins are the dominant structural components of the vertebrate eye lens. This is Gamma-crystallin F (Crygf) from Rattus norvegicus (Rat).